The primary structure comprises 368 residues: Glutaminyl-peptide cyclotransferase (368 aa).

An N-terminal signal peptide occupies residues 1 to 33 (MARERRDSKAATFFCLAWALCLALPGFPQHVSG). Asn53 carries N-linked (GlcNAc...) asparagine glycosylation. A disulfide bridge links Cys143 with Cys169. Asp164 contributes to the Zn(2+) binding site. Glu207 acts as the Proton acceptor in catalysis. Residue Glu208 coordinates Zn(2+). Asp254 serves as the catalytic Proton acceptor. N-linked (GlcNAc...) asparagine glycosylation occurs at Asn292. Residue His336 coordinates Zn(2+). The N-linked (GlcNAc...) asparagine glycan is linked to Asn352.

It belongs to the glutaminyl-peptide cyclotransferase family. As to expression, expressed by the venom gland.

It is found in the secreted. The catalysed reaction is N-terminal L-glutaminyl-[peptide] = N-terminal 5-oxo-L-prolyl-[peptide] + NH4(+). Functionally, responsible for the biosynthesis of pyroglutamyl peptides. Has a bias against acidic and tryptophan residues adjacent to the N-terminal glutaminyl residue and a lack of importance of chain length after the second residue. Also catalyzes N-terminal pyroglutamate formation. In Gloydius blomhoffii (Mamushi), this protein is Glutaminyl-peptide cyclotransferase (QPCT).